Consider the following 348-residue polypeptide: Holliday junction branch migration complex subunit RuvB (348 aa).

Residues 1 to 20 (MKPPARMVSPERRSDDVGDT) form a disordered region. The tract at residues 1–183 (MKPPARMVSP…FGIPIRLNFY (183 aa)) is large ATPase domain (RuvB-L). Residues Leu-22, Arg-23, Gly-64, Lys-67, Thr-68, Thr-69, 130 to 132 (EDF), Arg-173, Tyr-183, and Arg-220 each bind ATP. Thr-68 contributes to the Mg(2+) binding site. Residues 184-254 (TVEELEGIVT…IADHALSALE (71 aa)) form a small ATPAse domain (RuvB-S) region. The segment at 257–348 (AAGLDAMDRR…QIGLFGNDDD (92 aa)) is head domain (RuvB-H). The DNA site is built by Arg-293, Arg-312, and Arg-317.

It belongs to the RuvB family. Homohexamer. Forms an RuvA(8)-RuvB(12)-Holliday junction (HJ) complex. HJ DNA is sandwiched between 2 RuvA tetramers; dsDNA enters through RuvA and exits via RuvB. An RuvB hexamer assembles on each DNA strand where it exits the tetramer. Each RuvB hexamer is contacted by two RuvA subunits (via domain III) on 2 adjacent RuvB subunits; this complex drives branch migration. In the full resolvosome a probable DNA-RuvA(4)-RuvB(12)-RuvC(2) complex forms which resolves the HJ.

It localises to the cytoplasm. The enzyme catalyses ATP + H2O = ADP + phosphate + H(+). Its function is as follows. The RuvA-RuvB-RuvC complex processes Holliday junction (HJ) DNA during genetic recombination and DNA repair, while the RuvA-RuvB complex plays an important role in the rescue of blocked DNA replication forks via replication fork reversal (RFR). RuvA specifically binds to HJ cruciform DNA, conferring on it an open structure. The RuvB hexamer acts as an ATP-dependent pump, pulling dsDNA into and through the RuvAB complex. RuvB forms 2 homohexamers on either side of HJ DNA bound by 1 or 2 RuvA tetramers; 4 subunits per hexamer contact DNA at a time. Coordinated motions by a converter formed by DNA-disengaged RuvB subunits stimulates ATP hydrolysis and nucleotide exchange. Immobilization of the converter enables RuvB to convert the ATP-contained energy into a lever motion, pulling 2 nucleotides of DNA out of the RuvA tetramer per ATP hydrolyzed, thus driving DNA branch migration. The RuvB motors rotate together with the DNA substrate, which together with the progressing nucleotide cycle form the mechanistic basis for DNA recombination by continuous HJ branch migration. Branch migration allows RuvC to scan DNA until it finds its consensus sequence, where it cleaves and resolves cruciform DNA. In Bradyrhizobium sp. (strain ORS 278), this protein is Holliday junction branch migration complex subunit RuvB.